The sequence spans 200 residues: Large ribosomal subunit protein uL4 (200 aa).

Residues glycine 38 to glycine 65 form a disordered region.

Belongs to the universal ribosomal protein uL4 family. Part of the 50S ribosomal subunit.

In terms of biological role, one of the primary rRNA binding proteins, this protein initially binds near the 5'-end of the 23S rRNA. It is important during the early stages of 50S assembly. It makes multiple contacts with different domains of the 23S rRNA in the assembled 50S subunit and ribosome. Forms part of the polypeptide exit tunnel. This chain is Large ribosomal subunit protein uL4, found in Pseudomonas aeruginosa (strain LESB58).